The following is a 236-amino-acid chain: NAD(P)H-hydrate epimerase (236 aa).

The 207-residue stretch at 11–217 (AAALDRELMS…SIAKKYDFDV (207 aa)) folds into the YjeF N-terminal domain. Position 61–65 (61–65 (NNGGD)) interacts with (6S)-NADPHX. Positions 62 and 123 each coordinate K(+). Residues 127–133 (GFSFSGE) and Asp-156 each bind (6S)-NADPHX. Ser-159 lines the K(+) pocket.

The protein belongs to the NnrE/AIBP family. K(+) serves as cofactor.

It is found in the cytoplasm. It localises to the mitochondrion. It catalyses the reaction (6R)-NADHX = (6S)-NADHX. The catalysed reaction is (6R)-NADPHX = (6S)-NADPHX. Functionally, catalyzes the epimerization of the S- and R-forms of NAD(P)HX, a damaged form of NAD(P)H that is a result of enzymatic or heat-dependent hydration. This is a prerequisite for the S-specific NAD(P)H-hydrate dehydratase to allow the repair of both epimers of NAD(P)HX. The polypeptide is NAD(P)H-hydrate epimerase (Neurospora crassa (strain ATCC 24698 / 74-OR23-1A / CBS 708.71 / DSM 1257 / FGSC 987)).